Reading from the N-terminus, the 64-residue chain is Putative antitoxin MJ0975 (64 aa).

It belongs to the UPF0165 family.

In terms of biological role, possibly the antitoxin component of a type II toxin-antitoxin (TA) system. Its cognate toxin is VapC2 (Potential). This is Putative antitoxin MJ0975 (vapB2) from Methanocaldococcus jannaschii (strain ATCC 43067 / DSM 2661 / JAL-1 / JCM 10045 / NBRC 100440) (Methanococcus jannaschii).